A 394-amino-acid chain; its full sequence is Phenylalanine 4-monooxygenase, chloroplastic (394 aa).

The transit peptide at 1–79 directs the protein to the chloroplast; it reads MAMEVGYLRH…LNQIQAVSTA (79 aa). The segment at 75 to 97 is disordered; it reads AVSTAEKEREADKTSTPPIPSSI. Fe cation is bound by residues His252, His257, and Glu297.

This sequence belongs to the biopterin-dependent aromatic amino acid hydroxylase family. In terms of assembly, forms monomers. The cofactor is Fe(2+).

It localises to the plastid. The protein localises to the chloroplast. The enzyme catalyses (6R)-L-erythro-5,6,7,8-tetrahydrobiopterin + L-phenylalanine + O2 = (4aS,6R)-4a-hydroxy-L-erythro-5,6,7,8-tetrahydrobiopterin + L-tyrosine. In terms of biological role, catalyzes the hydroxylation of L-phenylalanine to L-tyrosine. Does not seem to be tetrahydropterin-dependent and shows preference for 10-formyltetrahydrofolate as cosubstrate and electron donor. The protein is Phenylalanine 4-monooxygenase, chloroplastic of Physcomitrium patens (Spreading-leaved earth moss).